Reading from the N-terminus, the 231-residue chain is Large ribosomal subunit protein uL1 (231 aa).

Belongs to the universal ribosomal protein uL1 family. As to quaternary structure, part of the 50S ribosomal subunit.

In terms of biological role, binds directly to 23S rRNA. The L1 stalk is quite mobile in the ribosome, and is involved in E site tRNA release. Functionally, protein L1 is also a translational repressor protein, it controls the translation of the L11 operon by binding to its mRNA. This chain is Large ribosomal subunit protein uL1, found in Acidovorax ebreus (strain TPSY) (Diaphorobacter sp. (strain TPSY)).